The following is a 757-amino-acid chain: Xaa-Pro dipeptidyl-peptidase (757 aa).

Catalysis depends on charge relay system residues S348, D468, and H498.

It belongs to the peptidase S15 family. As to quaternary structure, homodimer.

It is found in the cytoplasm. The catalysed reaction is Hydrolyzes Xaa-Pro-|- bonds to release unblocked, N-terminal dipeptides from substrates including Ala-Pro-|-p-nitroanilide and (sequentially) Tyr-Pro-|-Phe-Pro-|-Gly-Pro-|-Ile.. Removes N-terminal dipeptides sequentially from polypeptides having unsubstituted N-termini provided that the penultimate residue is proline. In Streptococcus pneumoniae (strain ATCC 700669 / Spain 23F-1), this protein is Xaa-Pro dipeptidyl-peptidase.